The primary structure comprises 177 residues: Large ribosomal subunit protein uL6 (177 aa).

The protein belongs to the universal ribosomal protein uL6 family. Part of the 50S ribosomal subunit.

This protein binds to the 23S rRNA, and is important in its secondary structure. It is located near the subunit interface in the base of the L7/L12 stalk, and near the tRNA binding site of the peptidyltransferase center. The sequence is that of Large ribosomal subunit protein uL6 from Acinetobacter baylyi (strain ATCC 33305 / BD413 / ADP1).